The following is a 349-amino-acid chain: Insulin gene enhancer protein isl-1 (349 aa).

LIM zinc-binding domains follow at residues 17–70 (CVGC…CKRD) and 79–133 (CAKC…RADH). The segment at residues 181-240 (TTRVRTVLNEKQLHTLRTCYNANPRPDALMKEQLVEMTGLSPRVIRVWFQNKRCKDKKRS) is a DNA-binding region (homeobox). The segment at 312–349 (VNFSEGGPGSNSTGSEVASMSSQLPDTPNSMVASPIEA) is disordered. Polar residues predominate over residues 321-343 (SNSTGSEVASMSSQLPDTPNSMV).

The protein resides in the nucleus. Its function is as follows. DNA-binding transcriptional activator. Recognizes and binds to the consensus octamer binding site 5'-ATAATTAA-3' in promoter of target genes. Plays a fundamental role in the gene regulatory network essential for retinal ganglion cell (RGC) differentiation. May be involved in subtype specialization of primary motoneurons. May bind to insulin gene enhancer sequences. Essential for heart development. This is Insulin gene enhancer protein isl-1 (isl1) from Danio rerio (Zebrafish).